The following is a 283-amino-acid chain: MTSVPPELIPVVVVGALGRMGAEVIKAVHLASDCELVGAVDTTPGKEGVEIGEELGIGVLDVALTSDIEACLCSVSQSFHRTGPGQGAVLVDFTHPSVVYEHTRAAFAYGVHPVIGTTGLSHQQLVDLSEFAAKASMGGAVIPNFSVGMVLLQQAAAAAARFYDNAELTELHHNRKADAPSGTCIKTAEMMEELGKSFNSPEVDEHESLTGSRGGLRASGLRLHSLRLPGLVAHQEVMFGAPGESYTLRHDTIDRSAYMPGVLLTVRKVRQLQGLVYGLERLI.

NAD(+)-binding positions include 15–20 (GALGRM) and 116–118 (GTT). Catalysis depends on histidine 172, which acts as the Proton donor/acceptor. Histidine 173 is a binding site for (S)-2,3,4,5-tetrahydrodipicolinate. Lysine 176 serves as the catalytic Proton donor. 182-183 (GT) is a (S)-2,3,4,5-tetrahydrodipicolinate binding site.

Belongs to the DapB family.

The protein localises to the cytoplasm. It carries out the reaction (S)-2,3,4,5-tetrahydrodipicolinate + NAD(+) + H2O = (2S,4S)-4-hydroxy-2,3,4,5-tetrahydrodipicolinate + NADH + H(+). The enzyme catalyses (S)-2,3,4,5-tetrahydrodipicolinate + NADP(+) + H2O = (2S,4S)-4-hydroxy-2,3,4,5-tetrahydrodipicolinate + NADPH + H(+). Its pathway is amino-acid biosynthesis; L-lysine biosynthesis via DAP pathway; (S)-tetrahydrodipicolinate from L-aspartate: step 4/4. Functionally, catalyzes the conversion of 4-hydroxy-tetrahydrodipicolinate (HTPA) to tetrahydrodipicolinate. This Prochlorococcus marinus (strain MIT 9313) protein is 4-hydroxy-tetrahydrodipicolinate reductase.